Consider the following 285-residue polypeptide: NAD kinase (285 aa).

The active-site Proton acceptor is Asp68. NAD(+)-binding positions include 68-69 (DG), 142-143 (ND), Arg153, Arg170, Asp172, and Gln242.

The protein belongs to the NAD kinase family. It depends on a divalent metal cation as a cofactor.

It localises to the cytoplasm. It carries out the reaction NAD(+) + ATP = ADP + NADP(+) + H(+). Functionally, involved in the regulation of the intracellular balance of NAD and NADP, and is a key enzyme in the biosynthesis of NADP. Catalyzes specifically the phosphorylation on 2'-hydroxyl of the adenosine moiety of NAD to yield NADP. The sequence is that of NAD kinase from Acidobacterium capsulatum (strain ATCC 51196 / DSM 11244 / BCRC 80197 / JCM 7670 / NBRC 15755 / NCIMB 13165 / 161).